A 491-amino-acid chain; its full sequence is UDP-N-acetylmuramate--L-alanine ligase (491 aa).

126–132 (GTHGKTT) is an ATP binding site.

The protein belongs to the MurCDEF family.

Its subcellular location is the cytoplasm. It catalyses the reaction UDP-N-acetyl-alpha-D-muramate + L-alanine + ATP = UDP-N-acetyl-alpha-D-muramoyl-L-alanine + ADP + phosphate + H(+). It participates in cell wall biogenesis; peptidoglycan biosynthesis. In terms of biological role, cell wall formation. The polypeptide is UDP-N-acetylmuramate--L-alanine ligase (Escherichia coli (strain SE11)).